A 510-amino-acid polypeptide reads, in one-letter code: Putative folylpolyglutamate synthase (510 aa).

98–101 is a binding site for ATP; it reads GKGS. 3 residues coordinate Mg(2+): Ser-122, Glu-189, and His-217. ATP is bound by residues Arg-342 and Asp-357.

The protein belongs to the folylpolyglutamate synthase family. The cofactor is a monovalent cation.

It is found in the mitochondrion inner membrane. It localises to the mitochondrion matrix. The protein localises to the cytoplasm. It carries out the reaction (6S)-5,6,7,8-tetrahydrofolyl-(gamma-L-Glu)(n) + L-glutamate + ATP = (6S)-5,6,7,8-tetrahydrofolyl-(gamma-L-Glu)(n+1) + ADP + phosphate + H(+). It participates in cofactor biosynthesis; tetrahydrofolylpolyglutamate biosynthesis. Its function is as follows. Catalyzes conversion of folates to polyglutamate derivatives allowing concentration of folate compounds in the cell and the intracellular retention of these cofactors, which are important substrates for most of the folate-dependent enzymes that are involved in one-carbon transfer reactions involved in purine, pyrimidine and amino acid synthesis. In Caenorhabditis elegans, this protein is Putative folylpolyglutamate synthase.